The chain runs to 536 residues: Cytoplasmic dynein 2 intermediate chain 2 (536 aa).

S15 carries the phosphoserine modification. The DYNLL2 binding stretch occupies residues 80–93; it reads RNHVDAQVQTEAPV. A DYNLRB1 binding region spans residues 106-131; it reads PRLAAFLRRVEAMVIRELNKNWQSHA. 5 WD repeats span residues 215-255, 264-308, 390-430, 433-473, and 480-520; these read EVPS…DPLL, THTD…QLQL, PHGG…PLTS, LSLK…QKPT, and QDES…TEQG.

The protein belongs to the dynein light intermediate chain family. As to quaternary structure, the cytoplasmic dynein 2 complex consists of two catalytic heavy chains (HCs) and a number of non-catalytic subunits presented by intermediate chains (ICs), light intermediate chains (LICs) and light chains (LCs). Among them, a heavy chain (DYNC2H1), two intermediate chains (DYNC2I2 and DYNC2I1), a light intermediate chain (DYNC2LI1), and a light chain (DYNLT2B) are unique to the cytoplasmic dynein complex 2, but a subset of the light chains are also shared by dynein-1 and dynein-2 complexes. Interacts with DYNC2I1; their C-terminal domains each bind a copy of the heavy chain, and their extended N-terminal regions are held together by an array of light chain dimers. Interacts with DYNLL2; this interaction is essential for dynein-2-mediated retrograde trafficking of ciliary proteins. Interacts with DYNLRB1; this interaction is essential for dynein-2-mediated retrograde trafficking of ciliary proteins. Interacts (via the WD domains) with MAP3K7 and TAB3. Interacts (via WD domains) with TAB2 (via C-terminus). Interacts (via WD domains) with TRAF6 (via TRAF-type domains). As to expression, expressed in several cell lines (at protein level).

The protein resides in the cytoplasm. The protein localises to the cytoskeleton. It localises to the cilium basal body. It is found in the cilium axoneme. Its subcellular location is the microtubule organizing center. The protein resides in the centrosome. The protein localises to the cell projection. It localises to the cilium. It is found in the filopodium. In terms of biological role, acts as one of several non-catalytic accessory components of the cytoplasmic dynein 2 complex (dynein-2 complex), a motor protein complex that drives the movement of cargos along microtubules within cilia and flagella in concert with the intraflagellar transport (IFT) system. DYNC2I2 plays a major role in retrograde ciliary protein trafficking and in ciliogenesis. Required also to maintain a functional transition zone. Acts as a negative regulator of the Toll-like and IL-1R receptor signaling pathways. Inhibits the MAP3K7-induced NF-kappa-B activation pathway. Inhibits MAP3K7 phosphorylation at 'Thr-184' and 'Thr-187' upon Il-1 beta stimulation. In Homo sapiens (Human), this protein is Cytoplasmic dynein 2 intermediate chain 2.